Reading from the N-terminus, the 718-residue chain is Probable protein S-acyltransferase 19 (718 aa).

2 consecutive transmembrane segments (helical) span residues 16–36 (VVAITVFCLLSVAYYAFFAPF) and 41–61 (IWEYILLGVYSPVALIVFVLY). The disordered stretch occupies residues 100-125 (ETGSHLQSSPSVASRTSTLPNSSVKG). Polar residues predominate over residues 103-124 (SHLQSSPSVASRTSTLPNSSVK). In terms of domain architecture, DHHC spans 174–224 (LFCTLCNAEVRKFSKHCRSCDKCVDCFDHHCRWLNNCVGRKNYMTFISLMA). Catalysis depends on Cys204, which acts as the S-palmitoyl cysteine intermediate. Transmembrane regions (helical) follow at residues 222–242 (LMAVSLLWLLIEAGVGIAVIV) and 277–297 (AVSMLALFPLGELFFFHMLLI). 3 disordered regions span residues 454-511 (SSVS…HVHE), 598-649 (PATT…QQQQ), and 664-718 (GPLV…GTRK). 2 stretches are compositionally biased toward polar residues: residues 479-488 (CRNSYAPSQG) and 598-626 (PATTSEPRTRFSSQNQPIPSSHMGNTQNP). Over residues 673–687 (DGLRHDGDSGREGQD) the composition is skewed to basic and acidic residues.

The protein belongs to the DHHC palmitoyltransferase family.

Its subcellular location is the cell membrane. The enzyme catalyses L-cysteinyl-[protein] + hexadecanoyl-CoA = S-hexadecanoyl-L-cysteinyl-[protein] + CoA. Functionally, palmitoyl acyltransferase. This chain is Probable protein S-acyltransferase 19 (PAT19), found in Arabidopsis thaliana (Mouse-ear cress).